A 468-amino-acid chain; its full sequence is Glutamate--tRNA ligase (468 aa).

The 'HIGH' region motif lies at 12–22 (PSPTGFIHLGN). Residues 244-248 (KMSKR) carry the 'KMSKS' region motif. An ATP-binding site is contributed by K247.

The protein belongs to the class-I aminoacyl-tRNA synthetase family. Glutamate--tRNA ligase type 1 subfamily. In terms of assembly, monomer.

Its subcellular location is the cytoplasm. It catalyses the reaction tRNA(Glu) + L-glutamate + ATP = L-glutamyl-tRNA(Glu) + AMP + diphosphate. Its function is as follows. Catalyzes the attachment of glutamate to tRNA(Glu) in a two-step reaction: glutamate is first activated by ATP to form Glu-AMP and then transferred to the acceptor end of tRNA(Glu). The polypeptide is Glutamate--tRNA ligase (Polynucleobacter necessarius subsp. necessarius (strain STIR1)).